A 366-amino-acid chain; its full sequence is Molybdopterin synthase catalytic subunit (366 aa).

Substrate-binding positions include histidine 101–arginine 102, lysine 117, and lysine 124–glutamate 126.

This sequence belongs to the MoaE family. MOCS2B subfamily. As to quaternary structure, heterotetramer; composed of 2 small (Mocs2A) and 2 large (Mocs2B) subunits.

It localises to the cytoplasm. It carries out the reaction 2 [molybdopterin-synthase sulfur-carrier protein]-C-terminal-Gly-aminoethanethioate + cyclic pyranopterin phosphate + H2O = molybdopterin + 2 [molybdopterin-synthase sulfur-carrier protein]-C-terminal Gly-Gly + 2 H(+). The protein operates within cofactor biosynthesis; molybdopterin biosynthesis. Its function is as follows. Catalytic subunit of the molybdopterin synthase complex, a complex that catalyzes the conversion of precursor Z into molybdopterin. Acts by mediating the incorporation of 2 sulfur atoms from thiocarboxylated Mocs2A into precursor Z to generate a dithiolene group. In Drosophila mojavensis (Fruit fly), this protein is Molybdopterin synthase catalytic subunit.